Reading from the N-terminus, the 110-residue chain is Large ribosomal subunit protein uL22 (110 aa).

It belongs to the universal ribosomal protein uL22 family. As to quaternary structure, part of the 50S ribosomal subunit.

In terms of biological role, this protein binds specifically to 23S rRNA; its binding is stimulated by other ribosomal proteins, e.g. L4, L17, and L20. It is important during the early stages of 50S assembly. It makes multiple contacts with different domains of the 23S rRNA in the assembled 50S subunit and ribosome. The globular domain of the protein is located near the polypeptide exit tunnel on the outside of the subunit, while an extended beta-hairpin is found that lines the wall of the exit tunnel in the center of the 70S ribosome. This Exiguobacterium sibiricum (strain DSM 17290 / CCUG 55495 / CIP 109462 / JCM 13490 / 255-15) protein is Large ribosomal subunit protein uL22.